A 369-amino-acid polypeptide reads, in one-letter code: Peptidyl-prolyl cis-trans isomerase D (369 aa).

One can recognise a PPIase cyclophilin-type domain in the interval 7-175; sequence YFDISCNGKP…EDWKIADCGE (169 aa). TPR repeat units follow at residues 217-250, 268-301, and 306-339; these read VSKI…LNDY, LSCY…EQID, and TKAL…EPND.

This sequence belongs to the cyclophilin-type PPIase family. PPIase D subfamily.

It is found in the cytoplasm. It carries out the reaction [protein]-peptidylproline (omega=180) = [protein]-peptidylproline (omega=0). Functionally, PPIases accelerate the folding of proteins. It catalyzes the cis-trans isomerization of proline imidic peptide bonds in oligopeptides. This chain is Peptidyl-prolyl cis-trans isomerase D (CPR6), found in Candida albicans (strain SC5314 / ATCC MYA-2876) (Yeast).